We begin with the raw amino-acid sequence, 286 residues long: Putative WUSCHEL-related homeobox 2 (286 aa).

Disordered regions lie at residues 1-25 (MAPAVQQQQSGGGGGSTGAAAVGST) and 128-152 (SSSSSCGGGLNEDANSLLSPTSPTT). Residues 23–87 (GSTTRWCPTP…NHKARDRQKL (65 aa)) constitute a DNA-binding region (homeobox; WUS-type).

Belongs to the WUS homeobox family.

The protein resides in the nucleus. Transcription factor which may be involved in developmental processes. The chain is Putative WUSCHEL-related homeobox 2 (WOX2) from Oryza sativa subsp. indica (Rice).